Here is a 576-residue protein sequence, read N- to C-terminus: Adenine deaminase (576 aa).

It belongs to the metallo-dependent hydrolases superfamily. Adenine deaminase family. It depends on Mn(2+) as a cofactor.

It catalyses the reaction adenine + H2O + H(+) = hypoxanthine + NH4(+). The protein is Adenine deaminase of Syntrophobacter fumaroxidans (strain DSM 10017 / MPOB).